Here is a 470-residue protein sequence, read N- to C-terminus: Serine/threonine-protein kinase PEPKR2 (470 aa).

Residues 107–355 form the Protein kinase domain; that stretch reads YVFGRNIGKG…ADEVLRHPWI (249 aa). ATP-binding positions include 113 to 121 and K136; that span reads IGKGKFGSV. Catalysis depends on D224, which acts as the Proton acceptor. A compositionally biased stretch (polar residues) spans 377-386; sequence GSSTCLQNRS. 2 disordered regions span residues 377–419 and 441–464; these read GSST…EEED and RSRVCSPTNNPIEQQHSSNLTSTS. The span at 387–403 shows a compositional bias: basic and acidic residues; it reads PTEKTDLNRADREKKIP. Polar residues predominate over residues 445-464; the sequence is CSPTNNPIEQQHSSNLTSTS.

The protein belongs to the protein kinase superfamily. Ser/Thr protein kinase family.

The enzyme catalyses L-seryl-[protein] + ATP = O-phospho-L-seryl-[protein] + ADP + H(+). It catalyses the reaction L-threonyl-[protein] + ATP = O-phospho-L-threonyl-[protein] + ADP + H(+). The sequence is that of Serine/threonine-protein kinase PEPKR2 (PEPKR2) from Arabidopsis thaliana (Mouse-ear cress).